A 412-amino-acid polypeptide reads, in one-letter code: Multifunctional CCA protein (412 aa).

Residues glycine 8 and arginine 11 each coordinate ATP. Residues glycine 8 and arginine 11 each contribute to the CTP site. Aspartate 21 and aspartate 23 together coordinate Mg(2+). Positions 91, 137, and 140 each coordinate ATP. Residues arginine 91, arginine 137, and arginine 140 each coordinate CTP. One can recognise an HD domain in the interval 228 to 329 (TGIHTLMTLS…VKLFDSIDAW (102 aa)).

It belongs to the tRNA nucleotidyltransferase/poly(A) polymerase family. Bacterial CCA-adding enzyme type 1 subfamily. Monomer. Can also form homodimers and oligomers. The cofactor is Mg(2+). Ni(2+) is required as a cofactor.

The enzyme catalyses a tRNA precursor + 2 CTP + ATP = a tRNA with a 3' CCA end + 3 diphosphate. It carries out the reaction a tRNA with a 3' CCA end + 2 CTP + ATP = a tRNA with a 3' CCACCA end + 3 diphosphate. Functionally, catalyzes the addition and repair of the essential 3'-terminal CCA sequence in tRNAs without using a nucleic acid template. Adds these three nucleotides in the order of C, C, and A to the tRNA nucleotide-73, using CTP and ATP as substrates and producing inorganic pyrophosphate. tRNA 3'-terminal CCA addition is required both for tRNA processing and repair. Also involved in tRNA surveillance by mediating tandem CCA addition to generate a CCACCA at the 3' terminus of unstable tRNAs. While stable tRNAs receive only 3'-terminal CCA, unstable tRNAs are marked with CCACCA and rapidly degraded. The protein is Multifunctional CCA protein of Escherichia coli O8 (strain IAI1).